Reading from the N-terminus, the 81-residue chain is Photosystem I iron-sulfur center (81 aa).

2 consecutive 4Fe-4S ferredoxin-type domains span residues 2 to 31 and 39 to 68; these read AHSV…MVPW and IASA…VRVY. Cys-11, Cys-14, Cys-17, Cys-21, Cys-48, Cys-51, Cys-54, and Cys-58 together coordinate [4Fe-4S] cluster.

As to quaternary structure, the eukaryotic PSI reaction center is composed of at least 11 subunits. The cofactor is [4Fe-4S] cluster.

Its subcellular location is the plastid. It localises to the chloroplast thylakoid membrane. It catalyses the reaction reduced [plastocyanin] + hnu + oxidized [2Fe-2S]-[ferredoxin] = oxidized [plastocyanin] + reduced [2Fe-2S]-[ferredoxin]. Its function is as follows. Apoprotein for the two 4Fe-4S centers FA and FB of photosystem I (PSI); essential for photochemical activity. FB is the terminal electron acceptor of PSI, donating electrons to ferredoxin. The C-terminus interacts with PsaA/B/D and helps assemble the protein into the PSI complex. Required for binding of PsaD and PsaE to PSI. PSI is a plastocyanin/cytochrome c6-ferredoxin oxidoreductase, converting photonic excitation into a charge separation, which transfers an electron from the donor P700 chlorophyll pair to the spectroscopically characterized acceptors A0, A1, FX, FA and FB in turn. This chain is Photosystem I iron-sulfur center, found in Gracilaria tenuistipitata var. liui (Red alga).